We begin with the raw amino-acid sequence, 432 residues long: Serine hydroxymethyltransferase (432 aa).

(6S)-5,6,7,8-tetrahydrofolate contacts are provided by residues Leu127 and 131–133 (GHL). The residue at position 236 (Lys236) is an N6-(pyridoxal phosphate)lysine.

The protein belongs to the SHMT family. As to quaternary structure, homodimer. The cofactor is pyridoxal 5'-phosphate.

The protein resides in the cytoplasm. It carries out the reaction (6R)-5,10-methylene-5,6,7,8-tetrahydrofolate + glycine + H2O = (6S)-5,6,7,8-tetrahydrofolate + L-serine. It participates in one-carbon metabolism; tetrahydrofolate interconversion. The protein operates within amino-acid biosynthesis; glycine biosynthesis; glycine from L-serine: step 1/1. Functionally, catalyzes the reversible interconversion of serine and glycine with tetrahydrofolate (THF) serving as the one-carbon carrier. This reaction serves as the major source of one-carbon groups required for the biosynthesis of purines, thymidylate, methionine, and other important biomolecules. Also exhibits THF-independent aldolase activity toward beta-hydroxyamino acids, producing glycine and aldehydes, via a retro-aldol mechanism. This chain is Serine hydroxymethyltransferase, found in Rhizobium rhizogenes (strain K84 / ATCC BAA-868) (Agrobacterium radiobacter).